We begin with the raw amino-acid sequence, 100 residues long: MHLQPKDLEKLLVVVAADLARRRQQRGLKLNHPEAIAIITYELMEGARDGRSVADLMSWGSTILTVDDVQEGVADMISMVQVEATFPDGTKLVTVHDPIR.

The protein belongs to the urease gamma subunit family. As to quaternary structure, heterotrimer of UreA (gamma), UreB (beta) and UreC (alpha) subunits. Three heterotrimers associate to form the active enzyme.

Its subcellular location is the cytoplasm. It carries out the reaction urea + 2 H2O + H(+) = hydrogencarbonate + 2 NH4(+). Its pathway is nitrogen metabolism; urea degradation; CO(2) and NH(3) from urea (urease route): step 1/1. The chain is Urease subunit gamma from Micrococcus luteus (strain ATCC 4698 / DSM 20030 / JCM 1464 / CCM 169 / CCUG 5858 / IAM 1056 / NBRC 3333 / NCIMB 9278 / NCTC 2665 / VKM Ac-2230) (Micrococcus lysodeikticus).